Here is a 512-residue protein sequence, read N- to C-terminus: ATP synthase subunit alpha (512 aa).

Residue 169 to 176 participates in ATP binding; it reads GDRQTGKT.

The protein belongs to the ATPase alpha/beta chains family. In terms of assembly, F-type ATPases have 2 components, CF(1) - the catalytic core - and CF(0) - the membrane proton channel. CF(1) has five subunits: alpha(3), beta(3), gamma(1), delta(1), epsilon(1). CF(0) has three main subunits: a(1), b(2) and c(9-12). The alpha and beta chains form an alternating ring which encloses part of the gamma chain. CF(1) is attached to CF(0) by a central stalk formed by the gamma and epsilon chains, while a peripheral stalk is formed by the delta and b chains.

Its subcellular location is the cell inner membrane. It carries out the reaction ATP + H2O + 4 H(+)(in) = ADP + phosphate + 5 H(+)(out). Produces ATP from ADP in the presence of a proton gradient across the membrane. The alpha chain is a regulatory subunit. This Aromatoleum aromaticum (strain DSM 19018 / LMG 30748 / EbN1) (Azoarcus sp. (strain EbN1)) protein is ATP synthase subunit alpha.